The following is a 111-amino-acid chain: Phosphoribosyl-ATP pyrophosphatase (111 aa).

Belongs to the PRA-PH family.

It localises to the cytoplasm. The catalysed reaction is 1-(5-phospho-beta-D-ribosyl)-ATP + H2O = 1-(5-phospho-beta-D-ribosyl)-5'-AMP + diphosphate + H(+). Its pathway is amino-acid biosynthesis; L-histidine biosynthesis; L-histidine from 5-phospho-alpha-D-ribose 1-diphosphate: step 2/9. This Pseudomonas aeruginosa (strain ATCC 15692 / DSM 22644 / CIP 104116 / JCM 14847 / LMG 12228 / 1C / PRS 101 / PAO1) protein is Phosphoribosyl-ATP pyrophosphatase (hisE).